A 496-amino-acid polypeptide reads, in one-letter code: Probable cytosol aminopeptidase (496 aa).

The Mn(2+) site is built by K261 and D266. Residue K273 is part of the active site. The Mn(2+) site is built by D284, D343, and E345. R347 is an active-site residue.

This sequence belongs to the peptidase M17 family. Mn(2+) is required as a cofactor.

The protein localises to the cytoplasm. The enzyme catalyses Release of an N-terminal amino acid, Xaa-|-Yaa-, in which Xaa is preferably Leu, but may be other amino acids including Pro although not Arg or Lys, and Yaa may be Pro. Amino acid amides and methyl esters are also readily hydrolyzed, but rates on arylamides are exceedingly low.. The catalysed reaction is Release of an N-terminal amino acid, preferentially leucine, but not glutamic or aspartic acids.. Functionally, presumably involved in the processing and regular turnover of intracellular proteins. Catalyzes the removal of unsubstituted N-terminal amino acids from various peptides. This is Probable cytosol aminopeptidase from Bacillus pumilus (strain SAFR-032).